Reading from the N-terminus, the 171-residue chain is Viral CASP8 and FADD-like apoptosis regulator (171 aa).

2 DED domains span residues 1–74 and 92–171; these read MSHY…RIFG and PFRC…NLQV.

Associates with the death-inducing signaling complex (DISC) formed by TNFRSF6, FADD and caspase-8. Interacts with FADD.

Inhibits TNFRSF1A, TNFRSF6, TNFRSF10 and TNFRSF12 induced apoptosis. May interfere with caspase-8 recruitment and activation at the death-inducing signaling complex (DISC). May lead to higher virus production and contribute to virus persistence and oncogenicity. This chain is Viral CASP8 and FADD-like apoptosis regulator, found in Equus caballus (Horse).